Here is a 191-residue protein sequence, read N- to C-terminus: DNA-directed RNA polymerase subunit Rpo3 (191 aa).

This sequence belongs to the archaeal Rpo3/eukaryotic RPB3 RNA polymerase subunit family. In terms of assembly, part of the RNA polymerase complex. Interacts with Rpo12. Forms an Rpo3-Rpo10-Rpo11-Rpo12 complex upon coexpression.

The protein resides in the cytoplasm. It carries out the reaction RNA(n) + a ribonucleoside 5'-triphosphate = RNA(n+1) + diphosphate. Functionally, DNA-dependent RNA polymerase (RNAP) catalyzes the transcription of DNA into RNA using the four ribonucleoside triphosphates as substrates. This is DNA-directed RNA polymerase subunit Rpo3 from Methanocaldococcus jannaschii (strain ATCC 43067 / DSM 2661 / JAL-1 / JCM 10045 / NBRC 100440) (Methanococcus jannaschii).